Consider the following 353-residue polypeptide: Rhodopsin (353 aa).

Topologically, residues 1-36 (MNGTEGPFFYVPMVNTTGIVRSPYDYPQYYLVSPAA) are extracellular. N-linked (GlcNAc...) asparagine glycosylation is found at Asn-2 and Asn-15. Residues 37-61 (YAALGAYMFLLILLGFPINFLTLYV) traverse the membrane as a helical segment. Over 62–73 (TIEHKKLRTPLN) the chain is Cytoplasmic. Residues 74–96 (YILLNLAVADLFMVFGGFTTTMY) form a helical membrane-spanning segment. The Extracellular portion of the chain corresponds to 97 to 110 (TSMHGYFVLGRLGC). A disulfide bridge links Cys-110 with Cys-187. Residues 111-133 (NMEGFFATLGGEIGLWSLVVLAV) form a helical membrane-spanning segment. The 'Ionic lock' involved in activated form stabilization signature appears at 134–136 (ERW). The Cytoplasmic segment spans residues 134–152 (ERWLVVCKPISNFRFGENH). A helical transmembrane segment spans residues 153–173 (AIMGLAFTWVMACSCAVPPLV). Residues 174–202 (GWSRYIPEGMQCSCGVDYYTRAEGFNNES) are Extracellular-facing. Asn-200 is a glycosylation site (N-linked (GlcNAc...) asparagine). Residues 203–224 (FVIYMFACHFIIPMCVVFFCYG) traverse the membrane as a helical segment. Residues 225–252 (RLLCAVKEAAAAQQESETTQRAEKEVTR) are Cytoplasmic-facing. Residues 253–274 (MVVIMGIAFLICWCPYASVAWY) form a helical membrane-spanning segment. Topologically, residues 275-286 (IFTHQGSEFGPV) are extracellular. A helical membrane pass occupies residues 287 to 308 (FMTLPAFFAKTSSVYNPLIYIL). At Lys-296 the chain carries N6-(retinylidene)lysine. Topologically, residues 309–353 (MNKQFRHCMITTLCCGKNPFEEEEGASTASKTEASSVSSSSVSPA) are cytoplasmic. S-palmitoyl cysteine attachment occurs at residues Cys-322 and Cys-323. The segment at 331-353 (EEGASTASKTEASSVSSSSVSPA) is disordered. The span at 334–353 (ASTASKTEASSVSSSSVSPA) shows a compositional bias: low complexity.

It belongs to the G-protein coupled receptor 1 family. Opsin subfamily. Phosphorylated on some or all of the serine and threonine residues present in the C-terminal region. In terms of processing, contains one covalently linked retinal chromophore.

It localises to the membrane. The protein resides in the cell projection. The protein localises to the cilium. Its subcellular location is the photoreceptor outer segment. Functionally, photoreceptor required for image-forming vision at low light intensity. While most salt water fish species use retinal as chromophore, most freshwater fish use 3-dehydroretinal, or a mixture of retinal and 3-dehydroretinal. Light-induced isomerization of 11-cis to all-trans retinal triggers a conformational change that activates signaling via G-proteins. Subsequent receptor phosphorylation mediates displacement of the bound G-protein alpha subunit by arrestin and terminates signaling. This chain is Rhodopsin (rho), found in Dicentrarchus labrax (European seabass).